The sequence spans 30 residues: L-serine dehydratase, alpha chain (30 aa).

This sequence belongs to the iron-sulfur dependent L-serine dehydratase family. Heterodimer of an alpha chain and a beta chain. [4Fe-4S] cluster serves as cofactor.

The enzyme catalyses L-serine = pyruvate + NH4(+). It participates in carbohydrate biosynthesis; gluconeogenesis. This Anaerotignum propionicum (Clostridium propionicum) protein is L-serine dehydratase, alpha chain.